The chain runs to 209 residues: Protein TIC 20-v, chloroplastic (209 aa).

The transit peptide at 1–49 (MAIISQFFAPLPSLTGTLTLTGRSFLPLNLDTQFPKPRLSRDRAATLVL) directs the protein to the chloroplast. A run of 4 helical transmembrane segments spans residues 63 to 83 (IISA…GKFI), 103 to 123 (AFKS…FVVV), 132 to 152 (VRFN…PDLL), and 173 to 193 (TVFL…LFGL).

Belongs to the Tic20 family. Part of the Tic complex. In terms of tissue distribution, expressed in leaves, siliques and roots.

It is found in the plastid. Its subcellular location is the chloroplast inner membrane. In terms of biological role, may be involved in protein precursor import into chloroplasts. Not redundant with TIC20-I, TIC20-II or TIC20-IV. This chain is Protein TIC 20-v, chloroplastic (TIC20-V), found in Arabidopsis thaliana (Mouse-ear cress).